Here is a 600-residue protein sequence, read N- to C-terminus: UvrABC system protein C (600 aa).

Residues 15–100 enclose the GIY-YIG domain; it reads NSAGVYEYFN…IKQLHPKYNI (86 aa). One can recognise a UVR domain in the interval 203–238; the sequence is SVLLKNLEKQMLVLAQNENYEEAAKIRDQIATIKDL.

This sequence belongs to the UvrC family. In terms of assembly, interacts with UvrB in an incision complex.

The protein resides in the cytoplasm. The UvrABC repair system catalyzes the recognition and processing of DNA lesions. UvrC both incises the 5' and 3' sides of the lesion. The N-terminal half is responsible for the 3' incision and the C-terminal half is responsible for the 5' incision. In Campylobacter jejuni subsp. doylei (strain ATCC BAA-1458 / RM4099 / 269.97), this protein is UvrABC system protein C.